Consider the following 331-residue polypeptide: Glucokinase (331 aa).

13-18 is an ATP binding site; sequence GDIGGT.

Belongs to the bacterial glucokinase family.

The protein localises to the cytoplasm. The enzyme catalyses D-glucose + ATP = D-glucose 6-phosphate + ADP + H(+). This Caulobacter vibrioides (strain ATCC 19089 / CIP 103742 / CB 15) (Caulobacter crescentus) protein is Glucokinase.